Here is a 212-residue protein sequence, read N- to C-terminus: Pyrrolidone-carboxylate peptidase (212 aa).

Active-site residues include E80, C143, and H165.

Belongs to the peptidase C15 family. In terms of assembly, homotetramer.

The protein resides in the cytoplasm. The enzyme catalyses Release of an N-terminal pyroglutamyl group from a polypeptide, the second amino acid generally not being Pro.. Removes 5-oxoproline from various penultimate amino acid residues except L-proline. The polypeptide is Pyrrolidone-carboxylate peptidase (Vibrio parahaemolyticus serotype O3:K6 (strain RIMD 2210633)).